A 426-amino-acid chain; its full sequence is Protein FAM124B (426 aa).

The protein belongs to the FAM124 family.

The protein localises to the nucleus. This Xenopus tropicalis (Western clawed frog) protein is Protein FAM124B (fam124b).